A 364-amino-acid chain; its full sequence is GTPase Obg (364 aa).

Residues 1-161 (MRFVDEVTIS…KYLRLELKIL (161 aa)) enclose the Obg domain. An OBG-type G domain is found at 162–334 (ADAGIIGLPN…LVDAIWKLQS (173 aa)). GTP is bound by residues 168–175 (GLPNAGKS), 193–197 (FTTLN), 217–220 (DIPG), 287–290 (NKID), and 315–317 (SAE). The Mg(2+) site is built by S175 and T195.

It belongs to the TRAFAC class OBG-HflX-like GTPase superfamily. OBG GTPase family. As to quaternary structure, monomer. The cofactor is Mg(2+).

The protein resides in the cytoplasm. In terms of biological role, an essential GTPase which binds GTP, GDP and possibly (p)ppGpp with moderate affinity, with high nucleotide exchange rates and a fairly low GTP hydrolysis rate. Plays a role in control of the cell cycle, stress response, ribosome biogenesis and in those bacteria that undergo differentiation, in morphogenesis control. The sequence is that of GTPase Obg from Lawsonia intracellularis (strain PHE/MN1-00).